The primary structure comprises 173 residues: Ribosome maturation factor RimM (173 aa).

The region spanning 92–165 is the PRC barrel domain; the sequence is EGEFYHADLI…RVVIEAPAEI (74 aa).

This sequence belongs to the RimM family. Binds ribosomal protein uS19.

The protein localises to the cytoplasm. Its function is as follows. An accessory protein needed during the final step in the assembly of 30S ribosomal subunit, possibly for assembly of the head region. Essential for efficient processing of 16S rRNA. May be needed both before and after RbfA during the maturation of 16S rRNA. It has affinity for free ribosomal 30S subunits but not for 70S ribosomes. This chain is Ribosome maturation factor RimM, found in Nitrobacter winogradskyi (strain ATCC 25391 / DSM 10237 / CIP 104748 / NCIMB 11846 / Nb-255).